The sequence spans 1406 residues: Protein crumbs homolog 1 (1406 aa).

Residues 1 to 25 form the signal peptide; the sequence is MALKNINYLLIFYLSFSLLIYIKNS. At 26 to 1347 the chain is on the extracellular side; that stretch reads FCNKNNTRCL…DDLISDIFTT (1322 aa). Residues N30, N41, and N42 are each glycosylated (N-linked (GlcNAc...) asparagine). EGF-like domains follow at residues 30-68, 70-108, and 110-146; these read NNTR…KDCD, MKDP…TICE, and TIGS…RFCE. Disulfide bonds link C34/C45, C39/C54, C56/C67, C74/C85, C79/C96, C98/C107, C114/C125, C119/C134, C136/C145, C152/C163, C157/C172, C174/C183, C190/C201, C195/C210, C212/C221, C228/C239, C233/C248, C250/C259, C266/C277, and C271/C286. The 37-residue stretch at 148 to 184 folds into the EGF-like 4; calcium-binding domain; that stretch reads DHDECASSPCQNGAVCQDGIDGYSCFCVPGYQGRHCD. Residues 186-222 enclose the EGF-like 5; calcium-binding domain; sequence EVDECASDPCKNEATCLNEIGRYTCICPHNYSGVNCE. N-linked (GlcNAc...) asparagine glycosylation is present at N215. The EGF-like 6; calcium-binding domain maps to 224–260; the sequence is EIDECWSQPCLNGATCQDALGAYFCDCAPGFLGDHCE. An EGF-like 7; calcium-binding domain is found at 262 to 299; it reads NTDECASQPCLHGGLCVDGENRYSCNCTGSGFTGTHCE. N-linked (GlcNAc...) asparagine glycosylation is present at N287. 13 cysteine pairs are disulfide-bonded: C288/C298, C305/C316, C310/C325, C327/C336, C343/C354, C348/C383, C385/C394, C401/C412, C406/C421, C423/C438, C445/C456, C450/C469, and C471/C480. 2 EGF-like domains span residues 301 to 337 and 339 to 395; these read LMPL…AQCE and DLNE…IHCE. N-linked (GlcNAc...) asparagine glycosylation is found at N313 and N322. The 43-residue stretch at 397–439 folds into the EGF-like 10; calcium-binding domain; it reads DVNECSSNPCQNGGTCENLPGNYTCHCPFDNLSRTFYGGRDCS. N-linked (GlcNAc...) asparagine glycans are attached at residues N418, N427, and N453. One can recognise an EGF-like 11 domain in the interval 441-481; it reads ILLGCTHQQCLNNGTCIPHFQDGQHGFSCLCPSGYTGSLCE. The region spanning 485 to 670 is the Laminin G-like 1 domain; sequence TLSFEGDGFL…GSSLNVKAGC (186 aa). N-linked (GlcNAc...) asparagine glycans are attached at residues N550, N561, and N657. 4 disulfide bridges follow: C642–C670, C676–C687, C681–C696, and C698–C707. An EGF-like 12 domain is found at 672-708; that stretch reads RKDWCESQPCQSRGRCINLWLSYQCDCHRPYEGPNCL. The Laminin G-like 2 domain occupies 714–885; the sequence is GRFGQDDSTG…PVLVNVTQGC (172 aa). 3 N-linked (GlcNAc...) asparagine glycosylation sites follow: N757, N871, and N880. 6 cysteine pairs are disulfide-bonded: C851-C885, C891-C902, C896-C911, C913-C922, C928-C939, and C933-C948. 2 consecutive EGF-like domains span residues 887-923 and 924-960; these read GDNS…KACE and EVQW…QSGQ. Residues 950–1137 enclose the Laminin G-like 3 domain; sequence ANAVFNGQSG…ISTNSVVTGC (188 aa). Residues N968, N975, and N1000 are each glycosylated (N-linked (GlcNAc...) asparagine). 16 disulfide bridges follow: C1096–C1137, C1143–C1154, C1148–C1163, C1165–C1174, C1181–C1191, C1186–C1200, C1202–C1211, C1218–C1229, C1223–C1238, C1240–C1249, C1259–C1274, C1268–C1283, C1285–C1294, C1301–C1312, C1306–C1321, and C1323–C1332. One can recognise an EGF-like 15 domain in the interval 1139-1175; the sequence is QLNVCNSNPCLHGGNCEDIYSSYHCSCPLGWSGKHCE. Positions 1177 to 1212 constitute an EGF-like 16; calcium-binding domain; it reads NIDECFSNPCIHGNCSDRVAAYHCTCEPGYTGVNCE. N1190 is a glycosylation site (N-linked (GlcNAc...) asparagine). EGF-like domains lie at 1214–1250 and 1255–1295; these read DIDN…KFCR and PSTV…EWCE. N1243, N1265, and N1273 each carry an N-linked (GlcNAc...) asparagine glycan. The EGF-like 19; calcium-binding domain maps to 1297-1333; it reads DIDECASDPCVNGGLCQDLLNKFQCLCDVAFAGERCE. Residues 1348 to 1368 form a helical membrane-spanning segment; that stretch reads IGSVTVALLLILLLAIVASVV. Residues 1369 to 1406 lie on the Cytoplasmic side of the membrane; sequence TSNKRATQGTYSPSRQEKEGSRVEMWNLMPPPAMERLI. Residues 1370-1406 form an interaction with EPB41L5 region; it reads SNKRATQGTYSPSRQEKEGSRVEMWNLMPPPAMERLI.

The protein belongs to the Crumbs protein family. As to quaternary structure, component of a complex composed of PALS1, CRB1 and EPB41L5. Within the complex, interacts (via intracellular domain) with PALS1 and EPB41L5 (via FERM domain). Forms a complex with MPP4 and PALS1. Interacts with MPDZ/MUPP1 and MPP4. Extensively glycosylated. In terms of tissue distribution, preferential expression in retina, also expressed in brain, testis, fetal brain and fetal eye. Expressed at the outer limiting membrane and apical to adherens junctions in the retina.

Its subcellular location is the apical cell membrane. It is found in the secreted. The protein resides in the cell projection. The protein localises to the cilium. It localises to the photoreceptor outer segment. Its subcellular location is the photoreceptor inner segment. Its function is as follows. Plays a role in photoreceptor morphogenesis in the retina. May maintain cell polarization and adhesion. The sequence is that of Protein crumbs homolog 1 from Homo sapiens (Human).